Here is a 383-residue protein sequence, read N- to C-terminus: Paralemmin-1 (383 aa).

N-acetylmethionine is present on methionine 1. Positions 5–102 (ATDTASQQER…KEIDVLEFGE (98 aa)) form a coiled coil. Disordered stretches follow at residues 51 to 163 (RERW…GSTM), 242 to 295 (TLSE…GQEP), and 334 to 375 (ATPR…MKKP). Over residues 69-96 (DMRKQMQEDEQKARGLEESITRLEKEID) the composition is skewed to basic and acidic residues. 2 stretches are compositionally biased toward polar residues: residues 109–124 (KENS…QSAS) and 133–143 (ETLVNAQQTPL). Phosphoserine is present on residues serine 116, serine 122, and serine 124. A phosphothreonine mark is found at threonine 141, threonine 145, and threonine 153. Serine 157 and serine 161 each carry phosphoserine. A Phosphothreonine modification is found at threonine 242. Position 244 is a phosphoserine (serine 244). Over residues 257 to 273 (GLAEDVTRTTPSRREIT) the composition is skewed to basic and acidic residues. The span at 285-295 (GPPGIQPGQEP) shows a compositional bias: low complexity. Phosphoserine is present on serine 345. Residues 357 to 367 (QTGPTTTPSDT) are compositionally biased toward polar residues. Threonine 361, threonine 362, and threonine 363 each carry phosphothreonine. A Phosphoserine modification is found at serine 365. At threonine 367 the chain carries Phosphothreonine. Residues cysteine 377 and cysteine 379 are each lipidated (S-palmitoyl cysteine). Position 380 is a cysteine methyl ester (cysteine 380). Cysteine 380 carries S-farnesyl cysteine lipidation. The propeptide at 381–383 (SVM) is removed in mature form.

Belongs to the paralemmin family. In terms of assembly, interacts with dopamine receptor DRD3. As to expression, expression is highest in brain, intermediate in adrenal gland and kidney, and much lower or undetectable in other tissues. Isoform 1 is the predominant isoform in most tissues except brain and kidney where isoform 2 predominates.

It is found in the cell membrane. The protein resides in the cell projection. The protein localises to the filopodium membrane. It localises to the axon. Its subcellular location is the dendrite. It is found in the dendritic spine. The protein resides in the basolateral cell membrane. The protein localises to the apicolateral cell membrane. Functionally, involved in plasma membrane dynamics and cell process formation. Isoform 1 and isoform 2 are necessary for axonal and dendritic filopodia induction, for dendritic spine maturation and synapse formation in a palmitoylation-dependent manner. The polypeptide is Paralemmin-1 (Palm) (Mus musculus (Mouse)).